The sequence spans 95 residues: Large ribosomal subunit protein bL25 (95 aa).

It belongs to the bacterial ribosomal protein bL25 family. As to quaternary structure, part of the 50S ribosomal subunit; part of the 5S rRNA/L5/L18/L25 subcomplex. Contacts the 5S rRNA. Binds to the 5S rRNA independently of L5 and L18.

This is one of the proteins that binds to the 5S RNA in the ribosome where it forms part of the central protuberance. The sequence is that of Large ribosomal subunit protein bL25 from Aeromonas salmonicida (strain A449).